Here is a 53-residue protein sequence, read N- to C-terminus: Large ribosomal subunit protein bL32c (53 aa).

It belongs to the bacterial ribosomal protein bL32 family.

Its subcellular location is the plastid. The protein localises to the chloroplast. This is Large ribosomal subunit protein bL32c from Glycine max (Soybean).